A 99-amino-acid chain; its full sequence is Large ribosomal subunit protein bL21 (99 aa).

This sequence belongs to the bacterial ribosomal protein bL21 family. In terms of assembly, part of the 50S ribosomal subunit. Contacts protein L20.

Functionally, this protein binds to 23S rRNA in the presence of protein L20. The sequence is that of Large ribosomal subunit protein bL21 from Neorickettsia sennetsu (strain ATCC VR-367 / Miyayama) (Ehrlichia sennetsu).